A 413-amino-acid chain; its full sequence is Phosphoribosylamine--glycine ligase (413 aa).

The ATP-grasp domain maps to K108–N310. Residue V134 to S190 coordinates ATP. E280 and N282 together coordinate Mg(2+).

It belongs to the GARS family. Requires Mg(2+) as cofactor. The cofactor is Mn(2+).

The catalysed reaction is 5-phospho-beta-D-ribosylamine + glycine + ATP = N(1)-(5-phospho-beta-D-ribosyl)glycinamide + ADP + phosphate + H(+). Its pathway is purine metabolism; IMP biosynthesis via de novo pathway; N(1)-(5-phospho-D-ribosyl)glycinamide from 5-phospho-alpha-D-ribose 1-diphosphate: step 2/2. This is Phosphoribosylamine--glycine ligase from Staphylococcus epidermidis (strain ATCC 12228 / FDA PCI 1200).